Consider the following 318-residue polypeptide: UDP-3-O-acylglucosamine N-acyltransferase (318 aa).

Histidine 231 acts as the Proton acceptor in catalysis.

Belongs to the transferase hexapeptide repeat family. LpxD subfamily. As to quaternary structure, homotrimer.

It catalyses the reaction a UDP-3-O-[(3R)-3-hydroxyacyl]-alpha-D-glucosamine + a (3R)-hydroxyacyl-[ACP] = a UDP-2-N,3-O-bis[(3R)-3-hydroxyacyl]-alpha-D-glucosamine + holo-[ACP] + H(+). It functions in the pathway bacterial outer membrane biogenesis; LPS lipid A biosynthesis. Its function is as follows. Catalyzes the N-acylation of UDP-3-O-acylglucosamine using 3-hydroxyacyl-ACP as the acyl donor. Is involved in the biosynthesis of lipid A, a phosphorylated glycolipid that anchors the lipopolysaccharide to the outer membrane of the cell. This is UDP-3-O-acylglucosamine N-acyltransferase from Campylobacter jejuni subsp. doylei (strain ATCC BAA-1458 / RM4099 / 269.97).